The sequence spans 134 residues: UPF0412 protein YaaI (134 aa).

The signal sequence occupies residues 1-23 (MKSVFTISASLAISLMLCCTAQA).

It belongs to the UPF0412 family.

This is UPF0412 protein YaaI from Escherichia coli (strain ATCC 8739 / DSM 1576 / NBRC 3972 / NCIMB 8545 / WDCM 00012 / Crooks).